The following is a 966-amino-acid chain: RNA polymerase-associated protein RapA (966 aa).

A Helicase ATP-binding domain is found at 163–337; it reads EVGQRLHPRV…FARLKLLDAD (175 aa). Residue 176–183 participates in ATP binding; sequence DEVGLGKT. The DEAH box signature appears at 283 to 286; it reads DEAH. In terms of domain architecture, Helicase C-terminal spans 488–642; it reads RVEWLITFLK…ICPMGMALFE (155 aa).

This sequence belongs to the SNF2/RAD54 helicase family. RapA subfamily. As to quaternary structure, interacts with the RNAP. Has a higher affinity for the core RNAP than for the holoenzyme. Its ATPase activity is stimulated by binding to RNAP.

Transcription regulator that activates transcription by stimulating RNA polymerase (RNAP) recycling in case of stress conditions such as supercoiled DNA or high salt concentrations. Probably acts by releasing the RNAP, when it is trapped or immobilized on tightly supercoiled DNA. Does not activate transcription on linear DNA. Probably not involved in DNA repair. The sequence is that of RNA polymerase-associated protein RapA from Actinobacillus succinogenes (strain ATCC 55618 / DSM 22257 / CCUG 43843 / 130Z).